Reading from the N-terminus, the 318-residue chain is Pyrimidine-specific ribonucleoside hydrolase RihA (318 aa).

His-240 is a catalytic residue.

The protein belongs to the IUNH family. RihA subfamily.

Hydrolyzes cytidine or uridine to ribose and cytosine or uracil, respectively. This is Pyrimidine-specific ribonucleoside hydrolase RihA from Shewanella sp. (strain ANA-3).